A 686-amino-acid chain; its full sequence is Asparagine-rich protein (686 aa).

A signal peptide spans 1-18 (MKGTSALLLIGFFHATIS). 3 disordered regions span residues 34–73 (KRGN…DKTA), 125–148 (SLTS…SSSI), and 201–236 (ITRQ…QPPN). The span at 37-49 (NLNTGGQITSNSA) shows a compositional bias: polar residues. Over residues 62–73 (EPPKRRNTDKTA) the composition is skewed to basic and acidic residues.

Prismatic layer of shell (at protein level). Expressed primarily in the mantle with highest level in the mantle edge and lower level in the mantle pallium.

Its subcellular location is the secreted. The polypeptide is Asparagine-rich protein (Margaritifera margaritifera (Freshwater pearl mussel)).